The primary structure comprises 367 residues: Glutamate 5-kinase (367 aa).

Lysine 10 contributes to the ATP binding site. Residues serine 50, aspartate 137, and asparagine 149 each contribute to the substrate site. ATP-binding positions include 169–170 and 211–217; these read TD and TGGMATK. In terms of domain architecture, PUA spans 275 to 353; that stretch reads AGELVVDDGA…QQIGEILGYE (79 aa).

Belongs to the glutamate 5-kinase family.

Its subcellular location is the cytoplasm. The enzyme catalyses L-glutamate + ATP = L-glutamyl 5-phosphate + ADP. It participates in amino-acid biosynthesis; L-proline biosynthesis; L-glutamate 5-semialdehyde from L-glutamate: step 1/2. Catalyzes the transfer of a phosphate group to glutamate to form L-glutamate 5-phosphate. This Erwinia tasmaniensis (strain DSM 17950 / CFBP 7177 / CIP 109463 / NCPPB 4357 / Et1/99) protein is Glutamate 5-kinase.